A 122-amino-acid polypeptide reads, in one-letter code: Large ribosomal subunit protein uL14c (122 aa).

The protein belongs to the universal ribosomal protein uL14 family. As to quaternary structure, part of the 50S ribosomal subunit.

The protein localises to the plastid. It is found in the chloroplast. Its function is as follows. Binds to 23S rRNA. This chain is Large ribosomal subunit protein uL14c, found in Nicotiana sylvestris (Wood tobacco).